The following is a 250-amino-acid chain: 3-deoxy-manno-octulosonate cytidylyltransferase (250 aa).

It belongs to the KdsB family.

It localises to the cytoplasm. It carries out the reaction 3-deoxy-alpha-D-manno-oct-2-ulosonate + CTP = CMP-3-deoxy-beta-D-manno-octulosonate + diphosphate. It functions in the pathway nucleotide-sugar biosynthesis; CMP-3-deoxy-D-manno-octulosonate biosynthesis; CMP-3-deoxy-D-manno-octulosonate from 3-deoxy-D-manno-octulosonate and CTP: step 1/1. It participates in bacterial outer membrane biogenesis; lipopolysaccharide biosynthesis. Its function is as follows. Activates KDO (a required 8-carbon sugar) for incorporation into bacterial lipopolysaccharide in Gram-negative bacteria. The chain is 3-deoxy-manno-octulosonate cytidylyltransferase from Janthinobacterium sp. (strain Marseille) (Minibacterium massiliensis).